The chain runs to 387 residues: Xylose isomerase (387 aa).

Active-site residues include histidine 53 and aspartate 56. Glutamate 180, glutamate 216, histidine 219, aspartate 244, aspartate 254, aspartate 256, and aspartate 286 together coordinate Mg(2+).

The protein belongs to the xylose isomerase family. In terms of assembly, homotetramer. It depends on Mg(2+) as a cofactor.

Its subcellular location is the cytoplasm. It carries out the reaction alpha-D-xylose = alpha-D-xylulofuranose. The protein is Xylose isomerase (xylA) of Thermus caldophilus.